A 571-amino-acid chain; its full sequence is MIRFELGNQICVCLSENDISLEINNTLHHAIPVSSNEYAILSTIATYGSLNAPISQRVIERKITQHYKMALPENGFKNAVAALRKKFRKLTEDHVSPTRNIIENIHRTGYFIPFTMLHTHQSGIYQQKRINQHTKNSVRKALRICLRNKRIYTDIAWVLLVTTAIFFSVCYYAINSIVKHNYLDSALDIADSLSQMSCYADEDQLKGLFDNVKLVESSMMLDRFNIRCLVTPEAVVPVSQKAFNEWSDNSNYTTQSFDINNATILVRVKNINLQNNVESHISRFFLSGMKLYTNTGTSFEIGNTNGRYFHYQIKDTGYKEVYYISGPLKSIILLSLFFLVILRHRSLQAFITYLFAIREFHIKLEPIYNTSTQQNIHYEALSRFKVKNTQRFIETLISNGLLLIHTILVIRAIYAKQPTLLVPISINVCPSLLRGRNFSTLYQELASRDCRLLTIEITENASMYYTSEIYDNVAKLKLLNCKISIDDFGTGNNNVSLISKINPDYLKIDREFVIGLKSDDKKVETLRQLIAMGNTYRCTVIVEGVETADSAHLLTTLGAYIHQGYFYPLHF.

Helical transmembrane passes span 155 to 175 (IAWV…YAIN), 321 to 341 (VYYI…FLVI), and 395 to 415 (TLIS…AIYA). The region spanning 344–571 (HRSLQAFITY…HQGYFYPLHF (228 aa)) is the EAL domain.

Its subcellular location is the cell inner membrane. It carries out the reaction 3',3'-c-di-GMP + H2O = 5'-phosphoguanylyl(3'-&gt;5')guanosine + H(+). Functionally, cyclic di-GMP phosphodiesterase that plays an important role in modulating the global c-di-GMP pool. Its ability to alter the c-di-GMP pool has an effect on swimming motility, swarming motility and biofilm formation, multicellular behaviors that are important for the survival and dissemination of this environmental pathogen. Exhibits a dual function, namely, c-di-GMP degradation and modulation of its own expression. The sequence is that of Cyclic di-GMP phosphodiesterase TpdA from Vibrio parahaemolyticus serotype O3:K6 (strain RIMD 2210633).